A 123-amino-acid polypeptide reads, in one-letter code: Large ribosomal subunit protein uL14c (123 aa).

Belongs to the universal ribosomal protein uL14 family. Part of the 50S ribosomal subunit.

Its subcellular location is the plastid. The protein localises to the chloroplast. Its function is as follows. Binds to 23S rRNA. In Triticum aestivum (Wheat), this protein is Large ribosomal subunit protein uL14c.